The chain runs to 194 residues: uncharacterized protein (194 aa).

Belongs to the mimivirus L114/R131 family.

This is an uncharacterized protein from Acanthamoeba polyphaga mimivirus (APMV).